A 163-amino-acid chain; its full sequence is Cyclic pyranopterin monophosphate synthase (163 aa).

Residues 79–81 (LCH) and 118–119 (ME) contribute to the substrate site. Residue Asp-133 is part of the active site.

This sequence belongs to the MoaC family. Homohexamer; trimer of dimers.

The catalysed reaction is (8S)-3',8-cyclo-7,8-dihydroguanosine 5'-triphosphate = cyclic pyranopterin phosphate + diphosphate. Its pathway is cofactor biosynthesis; molybdopterin biosynthesis. In terms of biological role, catalyzes the conversion of (8S)-3',8-cyclo-7,8-dihydroguanosine 5'-triphosphate to cyclic pyranopterin monophosphate (cPMP). This is Cyclic pyranopterin monophosphate synthase from Nocardioides sp. (strain ATCC BAA-499 / JS614).